Here is a 225-residue protein sequence, read N- to C-terminus: Ribonuclease 3 (225 aa).

The RNase III domain occupies 7-129 (IPRLCRTLGY…IIGAIYLDSE (123 aa)). E42 is a Mg(2+) binding site. D46 is an active-site residue. Mg(2+) contacts are provided by D115 and E118. E118 is a catalytic residue. One can recognise a DRBM domain in the interval 155-225 (DPKTLLQEHL…AAQVLELMKK (71 aa)).

It belongs to the ribonuclease III family. In terms of assembly, homodimer. Mg(2+) is required as a cofactor.

The protein resides in the cytoplasm. The catalysed reaction is Endonucleolytic cleavage to 5'-phosphomonoester.. In terms of biological role, digests double-stranded RNA. Involved in the processing of primary rRNA transcript to yield the immediate precursors to the large and small rRNAs (23S and 16S). Processes some mRNAs, and tRNAs when they are encoded in the rRNA operon. Processes pre-crRNA and tracrRNA of type II CRISPR loci if present in the organism. This is Ribonuclease 3 from Shewanella halifaxensis (strain HAW-EB4).